A 492-amino-acid chain; its full sequence is MAKMPETTFADLSLADKTAVKKSSIEARRFSDVSTCSFSSTCFTGSSDEEDVSPKDNHQRNSAGGTDFCVKSISKSAFGRREIEIAESEMPGIMTLRKRAKDEKPLKGANIVGCTHVNAQSAVLIETLVQLGATVRWAACNIYSTQNAVAAALAEAGIPIFAWRGETEEEFWWCLDRAIYSDGWQPNLILDDGGDATHLMLKKYPDYFKAIRGIVEESVTGVHRLYMLSKGGKLTVPAINVNDSVTKNKFDTFYTCRDSILDSLKRTTDIMFGGKQVVICGYGDVGKGCAQSLKGQGCIVYVTEVDPICALQAAMDGFRVVRLNEVIRTVDVVVTATGNKNVITRDHMNRMKNGCILCNMGHSCSEIDVNGLHTPELTWERVRSQVDHIRWPDGRMIILLAEGRLVNLSCSTISSFVVSVASSTQALALIELFSAPGRYKSDVYLLPKKMDEYVASLHLATFDAHLTELTDEQSKFMGLNKAGPFKANYYRY.

The tract at residues 43-64 is disordered; that stretch reads FTGSSDEEDVSPKDNHQRNSAG. The substrate site is built by Asp-192 and Glu-217. Position 218 to 220 (218 to 220) interacts with NAD(+); that stretch reads SVT. Substrate contacts are provided by Lys-247 and Asp-251. NAD(+)-binding positions include 283-288, Glu-304, 360-362, Asn-407, Lys-486, 486-490, and Tyr-490; these read GDVGKG, MGH, and KANYY.

Belongs to the adenosylhomocysteinase family. NAD(+) serves as cofactor.

Its function is as follows. Might play a role in the regulation of methionine metabolism. In Drosophila melanogaster (Fruit fly), this protein is Adenosylhomocysteinase-like 2.